The primary structure comprises 529 residues: Heat shock factor protein 1 (529 aa).

An N-acetylmethionine modification is found at methionine 1. The DNA-binding domain stretch occupies residues 15 to 120 (VPAFLTKLWT…LLENIKRKVT (106 aa)). The residue at position 80 (lysine 80) is an N6-acetyllysine. An N6-acetyllysine; alternate modification is found at lysine 91. Lysine 91 participates in a covalent cross-link: Glycyl lysine isopeptide (Lys-Gly) (interchain with G-Cter in SUMO2); alternate. An N6-acetyllysine modification is found at lysine 118. Serine 121 is modified (phosphoserine; by MAPKAPK2). Residues lysine 126 and lysine 131 each participate in a glycyl lysine isopeptide (Lys-Gly) (interchain with G-Cter in SUMO2) cross-link. Residues 130 to 203 (IKIRQDSVTK…ISLVQSNRIL (74 aa)) are hydrophobic repeat HR-A/B. Threonine 142 is subject to Phosphothreonine; by CK2. N6-acetyllysine is present on residues lysine 150 and lysine 188. Residues 203-224 (LGVKRKIPLMLNDSGSAHSMPK) are d domain. Lysine 208 bears the N6-acetyllysine; alternate mark. Residue lysine 208 forms a Glycyl lysine isopeptide (Lys-Gly) (interchain with G-Cter in SUMO2); alternate linkage. Position 216 is a phosphoserine; by PLK1 (serine 216). A regulatory domain region spans residues 221–310 (SMPKYSRQFS…PPSPPQSPRV (90 aa)). Lysine 224 is covalently cross-linked (Glycyl lysine isopeptide (Lys-Gly) (interchain with G-Cter in SUMO2)). At serine 230 the chain carries Phosphoserine; by CAMK2A. Serine 275 and serine 292 each carry phosphoserine. A disordered region spans residues 295–324 (VRVKEEPPSPPQSPRVEEASPGRPSSVDTL). Lysine 298 is subject to N6-acetyllysine; alternate. Lysine 298 is covalently cross-linked (Glycyl lysine isopeptide (Lys-Gly) (interchain with G-Cter in SUMO2); alternate). Lysine 298 participates in a covalent cross-link: Glycyl lysine isopeptide (Lys-Gly) (interchain with G-Cter in SUMO); alternate. Position 303 is a phosphoserine; by GSK3-beta (serine 303). Serine 307 is subject to Phosphoserine; by MAPK3. A phosphoserine mark is found at serine 314 and serine 319. Serine 320 is modified (phosphoserine; by PKA). The residue at position 323 (threonine 323) is a Phosphothreonine. Serine 326 carries the phosphoserine; by MAPK12 modification. The interval 336–372 (RESEPAPASVTALTDARGHTDTEGRPPSPPPTSTPEK) is disordered. Serine 344 is modified (phosphoserine). Serine 363 carries the phosphoserine; by MAPK8 modification. The segment at 371-529 (EKCLSVACLD…PPKAKDPTVS (159 aa)) is transactivation domain. Residues 384 to 409 (LSDHLDAMDSNLDNLQTMLSSHGFSV) form a hydrophobic repeat HR-C region. Positions 412–420 (SALLDLFSP) match the 9aaTAD motif. At serine 419 the chain carries Phosphoserine; by PLK1. The residue at position 444 (serine 444) is a Phosphoserine. 2 disordered regions span residues 444-463 (SPQE…DSGK) and 502-529 (EGDG…PTVS). Lysine 524 carries the post-translational modification N6-acetyllysine.

This sequence belongs to the HSF family. As to quaternary structure, monomer; cytoplasmic latent and transcriptionally inactive monomeric form in unstressed cells. Homotrimer; in response to stress, such as heat shock, homotrimerizes and translocates into the nucleus, binds to heat shock element (HSE) sequences in promoter of heat shock protein (HSP) genes and acquires transcriptional ability. Interacts (via monomeric form) with FKBP4; this interaction occurs in unstressed cells. Associates (via monomeric form) with HSP90 proteins in a multichaperone complex in unnstressed cell; this association maintains HSF1 in a non-DNA-binding and transcriptional inactive form by preventing HSF1 homotrimerization. Homotrimeric transactivation activity is modulated by protein-protein interactions and post-translational modifications. Interacts with HSP90AA1; this interaction is decreased in a IER5-dependent manner, promoting HSF1 accumulation in the nucleus, homotrimerization and DNA-binding activities. Part (via regulatory domain in the homotrimeric form) of a large heat shock-induced HSP90-dependent multichaperone complex at least composed of FKBP4, FKBP5, HSP90 proteins, PPID, PPP5C and PTGES3; this association maintains the HSF1 homotrimeric DNA-bound form in a transcriptionally inactive form. Interacts with BAG3 (via BAG domain); this interaction occurs in normal and heat-shocked cells promoting nuclear shuttling of HSF1 in a BAG3-dependent manner. Interacts (via homotrimeric and hyperphosphorylated form) with FKBP4; this interaction occurs upon heat shock in a HSP90-dependent multichaperone complex. Interacts (via homotrimeric form preferentially) with EEF1A proteins. In heat shocked cells, stress-denatured proteins compete with HSF1 homotrimeric DNA-bound form for association of the HSP90-dependent multichaperone complex, and hence alleviating repression of HSF1-mediated transcriptional activity. Interacts (via homotrimeric form preferentially) with DAXX; this interaction relieves homotrimeric HSF1 from repression of its transcriptional activity by HSP90-dependent multichaperone complex upon heat shock. Interacts (via D domain and preferentially with hyperphosphorylated form) with JNK1; this interaction occurs under both normal growth conditions and immediately upon heat shock. Interacts (via D domain and preferentially with hyperphosphorylated form) with MAPK3; this interaction occurs upon heat shock. Interacts with IER5 (via central region); this interaction promotes PPP2CA-induced dephosphorylation on Ser-121, Ser-307, Ser-314, Thr-323 and Thr-367 and HSF1 transactivation activity. Found in a ribonucleoprotein complex composed of the HSF1 homotrimeric form, translation elongation factor eEF1A proteins and non-coding RNA heat shock RNA-1 (HSR1); this complex occurs upon heat shock and stimulates HSF1 DNA-binding activity. Interacts (via transactivation domain) with HSPA1A/HSP70 and DNAJB1; these interactions result in the inhibition of heat shock- and HSF1-induced transcriptional activity during the attenuation and recovery phase from heat shock. Interacts (via Ser-303 and Ser-307 phosphorylated form) with YWHAE; this interaction promotes HSF1 sequestration in the cytoplasm in an ERK-dependent manner. Found in a complex with IER5 and PPP2CA. Interacts with TPR; this interaction increases upon heat shock and stimulates export of HSP70 mRNA. Interacts with SYMPK (via N-terminus) and CSTF2; these interactions occur upon heat shock. Interacts (via transactivation domain) with HSPA8. Interacts with EEF1D; this interaction occurs at heat shock promoter element (HSE) sequences. Interacts with MAPKAPK2. Interacts with PRKACA/PKA. Interacts (via transactivation domain) with GTF2A2. Interacts (via transactivation domain) with GTF2B. Interacts (via transactivation domain) with TBP. Interacts with CDK9, CCNT1 and EP300. Interacts (via N-terminus) with XRCC5 (via N-terminus) and XRCC6 (via N-terminus); these interactions are direct and prevent XRCC5/XRCC6 heterodimeric binding and non-homologous end joining (NHEJ) repair activities induced by ionizing radiation (IR). Interacts with PLK1; this interaction occurs during the early mitotic period, increases upon heat shock but does not modulate neither HSF1 homotrimerization and DNA-binding activities. Interacts (via Ser-216 phosphorylated form) with CDC20; this interaction occurs in mitosis in a MAD2L1-dependent manner and prevents PLK1-stimulated degradation of HSF1 by blocking the recruitment of the SCF(BTRC) ubiquitin ligase complex. Interacts with MAD2L1; this interaction occurs in mitosis. Interacts with BTRC; this interaction occurs during mitosis, induces its ubiquitin-dependent degradation following stimulus-dependent phosphorylation at Ser-216, a process inhibited by CDC20. Interacts with HSP90AA1 and HSP90AB1. Forms a complex with TTC5/STRAP and p300/EP300; these interactions augment chromatin-bound HSF1 and p300/EP300 histone acetyltransferase activity. In terms of processing, phosphorylated. Phosphorylated in unstressed cells; this phosphorylation is constitutive and implicated in the repression of HSF1 transcriptional activity. Phosphorylated on Ser-121 by MAPKAPK2; this phosphorylation promotes interaction with HSP90 proteins and inhibits HSF1 homotrimerization, DNA-binding and transactivation activities. Phosphorylation on Ser-303 by GSK3B/GSK3-beta and on Ser-307 by MAPK3 within the regulatory domain is involved in the repression of HSF1 transcriptional activity and occurs in a RAF1-dependent manner. Phosphorylation on Ser-303 and Ser-307 increases HSF1 nuclear export in a YWHAE- and XPO1/CRM1-dependent manner. Phosphorylation on Ser-307 is a prerequisite for phosphorylation on Ser-303. According to PubMed:9535852, Ser-303 is not phosphorylated in unstressed cells. Phosphorylated on Ser-419 by PLK1; phosphorylation promotes nuclear translocation upon heat shock. Hyperphosphorylated upon heat shock and during the attenuation and recovery phase period of the heat shock response. Phosphorylated on Thr-142; this phosphorylation increases HSF1 transactivation activity upon heat shock. Phosphorylation on Ser-230 by CAMK2A; this phosphorylation enhances HSF1 transactivation activity upon heat shock. Phosphorylation on Ser-326 by MAPK12; this phosphorylation enhances HSF1 nuclear translocation, homotrimerization and transactivation activities upon heat shock. Phosphorylated on Ser-320 by PRKACA/PKA; this phosphorylation promotes nuclear localization and transcriptional activity upon heat shock. Phosphorylated on Ser-363 by MAPK8; this phosphorylation occurs upon heat shock, induces HSF1 translocation into nuclear stress bodies and negatively regulates transactivation activity. Neither basal nor stress-inducible phosphorylation on Ser-230, Ser-292, Ser-303, Ser-307, Ser-314, Ser-319, Ser-320, Thr-323, Ser-326, Ser-338, Ser-344, Ser-363, Thr-367, Ser-368 and Thr-369 within the regulatory domain is involved in the regulation of HSF1 subcellular localization or DNA-binding activity; however, it negatively regulates HSF1 transactivation activity. Phosphorylated on Ser-216 by PLK1 in the early mitotic period; this phosphorylation regulates HSF1 localization to the spindle pole, the recruitment of the SCF(BTRC) ubiquitin ligase complex inducing HSF1 degradation, and hence mitotic progression. Dephosphorylated on Ser-121, Ser-307, Ser-314, Thr-323 and Thr-367 by phosphatase PPP2CA in an IER5-dependent manner, leading to HSF1-mediated transactivation activity. Post-translationally, sumoylated with SUMO1 and SUMO2 upon heat shock in a ERK2-dependent manner. Sumoylated by SUMO1 on Lys-298; sumoylation occurs upon heat shock and promotes its localization to nuclear stress bodies and DNA-binding activity. Phosphorylation on Ser-303 and Ser-307 is probably a prerequisite for sumoylation. Acetylated on Lys-118; this acetylation is decreased in a IER5-dependent manner. Acetylated on Lys-118, Lys-208 and Lys-298; these acetylations occur in a EP300-dependent manner. Acetylated on Lys-80; this acetylation inhibits DNA-binding activity upon heat shock. Deacetylated on Lys-80 by SIRT1; this deacetylation increases DNA-binding activity. In terms of processing, ubiquitinated by SCF(BTRC) and degraded following stimulus-dependent phosphorylation at Ser-216 by PLK1 in mitosis. Polyubiquitinated. Undergoes proteasomal degradation upon heat shock and during the attenuation and recovery phase period of the heat shock response.

It is found in the nucleus. The protein localises to the cytoplasm. It localises to the nucleoplasm. The protein resides in the perinuclear region. Its subcellular location is the cytoskeleton. It is found in the spindle pole. The protein localises to the microtubule organizing center. It localises to the centrosome. The protein resides in the chromosome. Its subcellular location is the centromere. It is found in the kinetochore. Functions as a stress-inducible and DNA-binding transcription factor that plays a central role in the transcriptional activation of the heat shock response (HSR), leading to the expression of a large class of molecular chaperones, heat shock proteins (HSPs), that protect cells from cellular insult damage. In unstressed cells, is present in a HSP90-containing multichaperone complex that maintains it in a non-DNA-binding inactivated monomeric form. Upon exposure to heat and other stress stimuli, undergoes homotrimerization and activates HSP gene transcription through binding to site-specific heat shock elements (HSEs) present in the promoter regions of HSP genes. Upon heat shock stress, forms a chromatin-associated complex with TTC5/STRAP and p300/EP300 to stimulate HSR transcription, therefore increasing cell survival. Activation is reversible, and during the attenuation and recovery phase period of the HSR, returns to its unactivated form. Binds to inverted 5'-NGAAN-3' pentamer DNA sequences. Binds to chromatin at heat shock gene promoters. Activates transcription of transcription factor FOXR1 which in turn activates transcription of the heat shock chaperones HSPA1A and HSPA6 and the antioxidant NADPH-dependent reductase DHRS2. Also serves several other functions independently of its transcriptional activity. Involved in the repression of Ras-induced transcriptional activation of the c-fos gene in heat-stressed cells. Positively regulates pre-mRNA 3'-end processing and polyadenylation of HSP70 mRNA upon heat-stressed cells in a symplekin (SYMPK)-dependent manner. Plays a role in nuclear export of stress-induced HSP70 mRNA. Plays a role in the regulation of mitotic progression. Also plays a role as a negative regulator of non-homologous end joining (NHEJ) repair activity in a DNA damage-dependent manner. Involved in stress-induced cancer cell proliferation in a IER5-dependent manner. Its function is as follows. (Microbial infection) Plays a role in latent human immunodeficiency virus (HIV-1) transcriptional reactivation. Binds to the HIV-1 long terminal repeat promoter (LTR) to reactivate viral transcription by recruiting cellular transcriptional elongation factors, such as CDK9, CCNT1 and EP300. The protein is Heat shock factor protein 1 of Homo sapiens (Human).